The primary structure comprises 259 residues: Imidazole glycerol phosphate synthase subunit HisF (259 aa).

Catalysis depends on residues D11 and D130.

The protein belongs to the HisA/HisF family. In terms of assembly, heterodimer of HisH and HisF.

It localises to the cytoplasm. It carries out the reaction 5-[(5-phospho-1-deoxy-D-ribulos-1-ylimino)methylamino]-1-(5-phospho-beta-D-ribosyl)imidazole-4-carboxamide + L-glutamine = D-erythro-1-(imidazol-4-yl)glycerol 3-phosphate + 5-amino-1-(5-phospho-beta-D-ribosyl)imidazole-4-carboxamide + L-glutamate + H(+). Its pathway is amino-acid biosynthesis; L-histidine biosynthesis; L-histidine from 5-phospho-alpha-D-ribose 1-diphosphate: step 5/9. Its function is as follows. IGPS catalyzes the conversion of PRFAR and glutamine to IGP, AICAR and glutamate. The HisF subunit catalyzes the cyclization activity that produces IGP and AICAR from PRFAR using the ammonia provided by the HisH subunit. This is Imidazole glycerol phosphate synthase subunit HisF from Acidovorax ebreus (strain TPSY) (Diaphorobacter sp. (strain TPSY)).